We begin with the raw amino-acid sequence, 621 residues long: Proton pump-interactor BIP131 (621 aa).

Residues 250 to 305 adopt a coiled-coil conformation; the sequence is IDEVKRDRQAVRDKIKVLEDQIHAVDGEIAALQDDLTAATARKDKAFEALNELRKT. Residues 374-387 are compositionally biased toward basic and acidic residues; sequence SRDGRMRNPDEKPI. Residues 374–572 are disordered; it reads SRDGRMRNPD…RSTVTKTKTP (199 aa). Low complexity predominate over residues 430-441; sequence KAPAKAAKAKQP. Positions 448–516 are enriched in basic and acidic residues; it reads PDVHDDEPPK…AEKKLKEKEK (69 aa). A coiled-coil region spans residues 466 to 524; sequence EAKLKEMKRQEEIEKNKLALERKKKQAEKQAMKAAARAEKEAEKKLKEKEKKARKRSAT. The chain crosses the membrane as a helical span at residues 589-609; that stretch reads WGAPMAALAAALVALLGALVY.

It belongs to the plant proton pump-interactor protein family. As to quaternary structure, interacts with BRI1.

It is found in the cell membrane. Functionally, may regulate plasma membrane ATPase activity. The sequence is that of Proton pump-interactor BIP131 from Oryza sativa subsp. japonica (Rice).